The following is a 317-amino-acid chain: Beta-ketoacyl-[acyl-carrier-protein] synthase III (317 aa).

Catalysis depends on residues Cys-112 and His-244. The tract at residues 245-249 is ACP-binding; the sequence is QANLR. Asn-274 is a catalytic residue.

This sequence belongs to the thiolase-like superfamily. FabH family. In terms of assembly, homodimer.

The protein localises to the cytoplasm. It catalyses the reaction malonyl-[ACP] + acetyl-CoA + H(+) = 3-oxobutanoyl-[ACP] + CO2 + CoA. It participates in lipid metabolism; fatty acid biosynthesis. Catalyzes the condensation reaction of fatty acid synthesis by the addition to an acyl acceptor of two carbons from malonyl-ACP. Catalyzes the first condensation reaction which initiates fatty acid synthesis and may therefore play a role in governing the total rate of fatty acid production. Possesses both acetoacetyl-ACP synthase and acetyl transacylase activities. Its substrate specificity determines the biosynthesis of branched-chain and/or straight-chain of fatty acids. This Baumannia cicadellinicola subsp. Homalodisca coagulata protein is Beta-ketoacyl-[acyl-carrier-protein] synthase III.